Consider the following 131-residue polypeptide: Interleukin-13 (131 aa).

The first 18 residues, Met1–Ala18, serve as a signal peptide directing secretion. Residues Asn39, Asn50, Asn58, and Asn74 are each glycosylated (N-linked (GlcNAc...) asparagine). Intrachain disulfides connect Cys49–Cys78 and Cys66–Cys92.

This sequence belongs to the IL-4/IL-13 family. In terms of assembly, interacts with IL13RA2.

The protein resides in the secreted. Functionally, cytokine that plays important roles in allergic inflammation and immune response to parasite infection. Synergizes with IL2 in regulating interferon-gamma synthesis. Stimulates B-cell proliferation, and activation of eosinophils, basophils, and mast cells. Plays an important role in controlling IL33 activity by modulating the production of transmembrane and soluble forms of interleukin-1 receptor-like 1/IL1RL1. Displays the capacity to antagonize Th1-driven proinflammatory immune response and downregulates synthesis of many proinflammatory cytokines including IL1, IL6, IL10, IL12 and TNF-alpha through a mechanism that partially involves suppression of NF-kappa-B. Also functions on nonhematopoietic cells, including endothelial cells where it induces vascular cell adhesion protein 1/VCAM1, which is important in the recruitment of eosinophils. Exerts its biological effects through its receptors which comprises the IL4R chain and the IL13RA1 chain, to activate JAK1 and TYK2, leading to the activation of STAT6. Aside from IL13RA1, another receptor IL13RA2 acts as a high affinity decoy for IL13 and mediates internalization and depletion of extracellular IL13. The polypeptide is Interleukin-13 (IL13) (Sus scrofa (Pig)).